We begin with the raw amino-acid sequence, 718 residues long: Phenylalanine--tRNA ligase beta subunit (718 aa).

Positions 39-153 (LNEISGIKFG…IFDLESNPLK (115 aa)) constitute a tRNA-binding domain. The 75-residue stretch at 386–460 (SKKTFLDLNY…RFYGLEKLKD (75 aa)) folds into the B5 domain. The Mg(2+) site is built by aspartate 438, aspartate 444, and aspartate 448.

The protein belongs to the phenylalanyl-tRNA synthetase beta subunit family. Type 1 subfamily. As to quaternary structure, tetramer of two alpha and two beta subunits. Requires Mg(2+) as cofactor.

It is found in the cytoplasm. It catalyses the reaction tRNA(Phe) + L-phenylalanine + ATP = L-phenylalanyl-tRNA(Phe) + AMP + diphosphate + H(+). The polypeptide is Phenylalanine--tRNA ligase beta subunit (Mesomycoplasma hyopneumoniae (strain J / ATCC 25934 / NCTC 10110) (Mycoplasma hyopneumoniae)).